We begin with the raw amino-acid sequence, 395 residues long: Na(+)/H(+) antiporter NhaA (395 aa).

12 helical membrane passes run 18-38, 64-84, 100-120, 129-149, 160-180, 182-202, 205-225, 226-246, 266-286, 295-315, 333-353, and 368-388; these read AGGI…NSPL, LLMW…GLEV, IFPA…YWLV, GGWA…LVLL, FLLA…ALFF, HDLS…LILL, FKVS…VSVL, KSGV…PLKG, FLIL…GLGM, LGVT…FSYL, IFAV…LASL, and LGIL…LFVT.

It belongs to the NhaA Na(+)/H(+) (TC 2.A.33) antiporter family.

It localises to the cell inner membrane. It carries out the reaction Na(+)(in) + 2 H(+)(out) = Na(+)(out) + 2 H(+)(in). Na(+)/H(+) antiporter that extrudes sodium in exchange for external protons. The polypeptide is Na(+)/H(+) antiporter NhaA (Histophilus somni (strain 129Pt) (Haemophilus somnus)).